The sequence spans 353 residues: Protein arginine N-methyltransferase 1 (353 aa).

The SAM-dependent MTase PRMT-type domain occupies lysine 32 to arginine 353. S-adenosyl-L-methionine-binding residues include histidine 45, arginine 54, glycine 78, and glutamate 100. At lysine 116 the chain carries N6-succinyllysine. Lysine 127 is covalently cross-linked (Glycyl lysine isopeptide (Lys-Gly) (interchain with G-Cter in ubiquitin)). Glutamate 129 is an S-adenosyl-L-methionine binding site. Active-site residues include glutamate 144 and glutamate 153. N6-acetyllysine is present on residues lysine 210 and lysine 215. Phosphoserine is present on residues serine 286 and serine 289.

Belongs to the class I-like SAM-binding methyltransferase superfamily. Protein arginine N-methyltransferase family. As to quaternary structure, homodimer and heterodimer with PRMT8. Homooctamer; individual homodimers associates to form a homooctamer. Interacts with NFATC2IP. Interacts with ILF3 and SUPT5H. Individual homodimers can associate to form a homohexamer. Interacts with FOXO1; the interaction methylates FOXO1, retaining it in the nucleus and increasing its transcriptional activity. Methylation of FOXO1 is increased with oxidative stress. Interacts with CHTOP; the interaction methylates CHTOP, enabling its interaction with the 5FMC complex. Interacts with BTG1, BTG2 and IFNAR1. Interacts with and probably methylates ATXN2L. Component of the methylosome, a 20S complex containing at least CLNS1A/pICln, PRMT5/SKB1, WDR77/MEP50, PRMT1 and ERH. Interacts with DHX9 (via RGG region). Interacts (via N-terminus) with HABP4. Interacts with MAP3K5/ASK1; the interaction results in MAP3K5 methylation by PRMT1 which inhibits MAP3K5 activation. Interacts with TRIM48; the interaction results in ubiquitination of PRMT1 by TRIM48, leading to PRMT1 proteasomal degradation and activation of MAP3K5. Interacts with GATOR1 complex; this interaction is S-adenosyl-L-methionine (SAM) dependent and is perturbated by SAMTOR in a SAM-sensitive manner. Interacts with GFI1; promoting recognition and binding of MRE11 and TP53BP1 substrates by PRMT1. In terms of processing, polyubiquitinated at Lys-127 by the SCF(FBXL17) complex, leading to its subsequent degradation. Ubiquitination is regulated by acetylation at Lys-210 and Lys-215. Polyubiquitinated by E3 ubiquitin-protein ligase TRIM48, leading to suppression of MAP3K5/ASK1 methylation and subsequent MAP3K5 activation. Post-translationally, acetylation at Lys-210 and Lys-215 regulates ubiquitination by the SCF(FBXL17) complex. Acetylated at Lys-215 by p300/EP300. Deacetylated at Lys-210 and Lys-215 by SIRT1. As to expression, ubiquitous.

The protein localises to the nucleus. It is found in the nucleoplasm. The protein resides in the cytoplasm. It localises to the cytosol. Its subcellular location is the lysosome membrane. It catalyses the reaction L-arginyl-[protein] + 2 S-adenosyl-L-methionine = N(omega),N(omega)-dimethyl-L-arginyl-[protein] + 2 S-adenosyl-L-homocysteine + 2 H(+). The enzyme catalyses L-arginyl-[protein] + S-adenosyl-L-methionine = N(omega)-methyl-L-arginyl-[protein] + S-adenosyl-L-homocysteine + H(+). It carries out the reaction N(omega)-methyl-L-arginyl-[protein] + S-adenosyl-L-methionine = N(omega),N(omega)-dimethyl-L-arginyl-[protein] + S-adenosyl-L-homocysteine + H(+). Functionally, arginine methyltransferase that methylates (mono and asymmetric dimethylation) the guanidino nitrogens of arginyl residues present in proteins such as ESR1, histone H2, H3 and H4, FMR1, ILF3, HNRNPA1, HNRNPD, NFATC2IP, SUPT5H, TAF15, EWS, HABP4, SERBP1, RBM15, FOXO1, CHTOP, MAP3K5/ASK1 and MICU1. Constitutes the main enzyme that mediates monomethylation and asymmetric dimethylation of histone H4 'Arg-3' (H4R3me1 and H4R3me2a, respectively), a specific tag for epigenetic transcriptional activation. May be involved in the regulation of TAF15 transcriptional activity, act as an activator of estrogen receptor (ER)-mediated transactivation, play a key role in neurite outgrowth and act as a negative regulator of megakaryocytic differentiation, by modulating p38 MAPK pathway. Methylates RBM15, promoting ubiquitination and degradation of RBM15. Methylates MRE11 and TP53BP1, promoting the DNA damage response. Methylates FOXO1 and retains it in the nucleus increasing its transcriptional activity. Methylates CHTOP and this methylation is critical for its 5-hydroxymethylcytosine (5hmC)-binding activity. Methylates MAP3K5/ASK1 at 'Arg-85' and 'Arg-87' which promotes association of MAP3K5 with thioredoxin and negatively regulates MAP3K5 association with TRAF2, inhibiting MAP3K5 stimulation and MAP3K5-induced activation of JNK. Methylates H4R3 in genes involved in glioblastomagenesis in a CHTOP- and/or TET1-dependent manner. Plays a role in regulating alternative splicing in the heart. Methylates NPRL2 at 'Arg-78' leading to inhibition of its GTPase activator activity and then the GATOR1 complex and consequently inducing timely mTORC1 activation under methionine-sufficient conditions. The protein is Protein arginine N-methyltransferase 1 of Rattus norvegicus (Rat).